The sequence spans 360 residues: Deoxyhypusine hydroxylase (360 aa).

3 HEAT-like PBS-type repeats span residues L56–D82, V89–D115, and E213–D245. Residues H58, E59, H91, and E92 each coordinate Fe cation. Fe cation contacts are provided by H252, E253, H285, and E286.

The protein belongs to the deoxyhypusine hydroxylase family. Fe(2+) is required as a cofactor.

It is found in the cytoplasm. Its subcellular location is the nucleus. The catalysed reaction is [eIF5A protein]-deoxyhypusine + AH2 + O2 = [eIF5A protein]-hypusine + A + H2O. It functions in the pathway protein modification; eIF5A hypusination. Catalyzes the hydroxylation of the N(6)-(4-aminobutyl)-L-lysine intermediate to form hypusine, an essential post-translational modification only found in mature eIF-5A factor. The protein is Deoxyhypusine hydroxylase of Mycosarcoma maydis (Corn smut fungus).